Reading from the N-terminus, the 160-residue chain is uncharacterized protein (160 aa).

Positions 26, 28, 50, and 61 each coordinate Zn(2+). The GRF-type; atypical zinc finger occupies 26–69 (CWCGEEIITFTSKTKENPYRRFYRCAIAMKRENEEHLFKWVDEA).

This is an uncharacterized protein from Arabidopsis thaliana (Mouse-ear cress).